Here is a 459-residue protein sequence, read N- to C-terminus: uncharacterized protein (459 aa).

A B12-binding domain is found at 13 to 145 (TESAIKRVVG…DALSKGRELK (133 aa)). In terms of domain architecture, Radical SAM core spans 188–402 (ADGVPFGVVM…MNWRKYTTID (215 aa)). Positions 202, 206, and 209 each coordinate [4Fe-4S] cluster.

Belongs to the methyltransferase superfamily. [4Fe-4S] cluster serves as cofactor.

This is an uncharacterized protein from Pyrococcus horikoshii (strain ATCC 700860 / DSM 12428 / JCM 9974 / NBRC 100139 / OT-3).